A 205-amino-acid polypeptide reads, in one-letter code: LexA repressor (205 aa).

The H-T-H motif DNA-binding region spans 28-48 (RAEIAHKLGFRSANSAEEHLK). Active-site for autocatalytic cleavage activity residues include Ser122 and Lys159.

This sequence belongs to the peptidase S24 family. As to quaternary structure, homodimer.

It carries out the reaction Hydrolysis of Ala-|-Gly bond in repressor LexA.. Its function is as follows. Represses a number of genes involved in the response to DNA damage (SOS response), including recA and lexA. In the presence of single-stranded DNA, RecA interacts with LexA causing an autocatalytic cleavage which disrupts the DNA-binding part of LexA, leading to derepression of the SOS regulon and eventually DNA repair. The polypeptide is LexA repressor (Idiomarina loihiensis (strain ATCC BAA-735 / DSM 15497 / L2-TR)).